The chain runs to 293 residues: Nucleotide-binding protein BCG9842_B5683 (293 aa).

14-21 is a binding site for ATP; the sequence is GMSGAGKT. 65 to 68 provides a ligand contact to GTP; the sequence is DLRG.

The protein belongs to the RapZ-like family.

Functionally, displays ATPase and GTPase activities. In Bacillus cereus (strain G9842), this protein is Nucleotide-binding protein BCG9842_B5683.